A 188-amino-acid chain; its full sequence is Ribose 1,5-bisphosphate phosphokinase PhnN (188 aa).

ATP is bound at residue 9–16 (GPSGAGKD).

It belongs to the ribose 1,5-bisphosphokinase family.

The enzyme catalyses alpha-D-ribose 1,5-bisphosphate + ATP = 5-phospho-alpha-D-ribose 1-diphosphate + ADP. Its pathway is metabolic intermediate biosynthesis; 5-phospho-alpha-D-ribose 1-diphosphate biosynthesis; 5-phospho-alpha-D-ribose 1-diphosphate from D-ribose 5-phosphate (route II): step 3/3. Functionally, catalyzes the phosphorylation of ribose 1,5-bisphosphate to 5-phospho-D-ribosyl alpha-1-diphosphate (PRPP). In Pectobacterium parmentieri (strain WPP163) (Pectobacterium wasabiae (strain WPP163)), this protein is Ribose 1,5-bisphosphate phosphokinase PhnN.